The primary structure comprises 180 residues: Nucleoside triphosphate/diphosphate phosphatase (180 aa).

The Proton donor role is filled by Arg26. Mg(2+) is bound by residues Asn90, Asp106, Asp108, Asp110, Asp123, and Glu126.

This sequence belongs to the Ntdp family. Mg(2+) serves as cofactor.

The catalysed reaction is a ribonucleoside 5'-triphosphate + H2O = a ribonucleoside 5'-diphosphate + phosphate + H(+). It catalyses the reaction a ribonucleoside 5'-diphosphate + H2O = a ribonucleoside 5'-phosphate + phosphate + H(+). Functionally, has nucleoside phosphatase activity towards nucleoside triphosphates and nucleoside diphosphates. This is Nucleoside triphosphate/diphosphate phosphatase from Staphylococcus aureus (strain MSSA476).